The chain runs to 260 residues: Uroplakin-1b (260 aa).

Topologically, residues 1–15 (MAKDDSTVRCFQGLL) are cytoplasmic. A helical transmembrane segment spans residues 16–36 (IFGHVIVGMCGIALTAECIFF). Residues 37–59 (VSDQHSLYPLLEATNNDDIFGAA) are Extracellular-facing. A helical membrane pass occupies residues 60–80 (WIGMFVGICLFCLSVLAIVGI). Over 81-86 (MKSNRK) the chain is Cytoplasmic. A helical membrane pass occupies residues 87-107 (ILLAYFIMMFIVYGFEVASCI). Residues 108 to 229 (TAATQRDFFT…ELISGPMDRH (122 aa)) are Extracellular-facing. Residues 230–250 (AWGVAWFGFAILCWTFWVLLG) traverse the membrane as a helical segment. At 251–260 (TMFYWSRIEY) the chain is on the cytoplasmic side.

Belongs to the tetraspanin (TM4SF) family. As to quaternary structure, heterodimer with uroplakin-3A (UPK3A) or uroplakin-3B (UPK3B). Post-translationally, N-glycosylated with high-mannose oligosaccharides. As to expression, bladder epithelium.

The protein localises to the membrane. Functionally, component of the asymmetric unit membrane (AUM); a highly specialized biomembrane elaborated by terminally differentiated urothelial cells. May play an important role in normal bladder epithelial physiology, possibly in regulating membrane permeability of superficial umbrella cells or in stabilizing the apical membrane through AUM/cytoskeletal interactions. The chain is Uroplakin-1b (Upk1b) from Mus musculus (Mouse).